Here is an 85-residue protein sequence, read N- to C-terminus: uncharacterized protein (85 aa).

This sequence belongs to the ycf76 family.

Its subcellular location is the plastid. It is found in the chloroplast. This is an uncharacterized protein from Zea mays (Maize).